Consider the following 238-residue polypeptide: MASEITYAEVKFKNESNSLHTYSESPAAPREKPIRDLRKPGSPSLLLTSLMLLLLLLAITFLVAFIIYFQKYSQLLEEKKAAKNIMHNELNCTKSVSPMEDKVWSCCPKDWRLFGSHCYLVPTVSSSASWNKSEENCSRMGAHLVVIQSQEEQDFITGILDTHAAYFIGLWDTGHRQWQWVDQTPYEESITFWHNGEPSSGNEKCATIIYRWKTGWGWNDISCSLKQKSVCQMKKINL.

Residues 1–48 are Cytoplasmic-facing; sequence MASEITYAEVKFKNESNSLHTYSESPAAPREKPIRDLRKPGSPSLLLT. Residues 5-10 carry the ITIM motif motif; sequence ITYAEV. A helical; Signal-anchor for type II membrane protein membrane pass occupies residues 49 to 69; it reads SLMLLLLLLAITFLVAFIIYF. The Extracellular portion of the chain corresponds to 70-238; that stretch reads QKYSQLLEEK…SVCQMKKINL (169 aa). Asn-91 is a glycosylation site (N-linked (GlcNAc...) asparagine). Cys-107 and Cys-118 form a disulfide bridge. The C-type lectin domain occupies 126–233; it reads SSASWNKSEE…SLKQKSVCQM (108 aa). N-linked (GlcNAc...) asparagine glycosylation is found at Asn-131 and Asn-136. Cystine bridges form between Cys-137/Cys-231 and Cys-205/Cys-223. Positions 146, 152, 197, 199, and 203 each coordinate Ca(2+). Alpha-D-mannopyranose is bound by residues 197 to 199 and Glu-203; that span reads EPS. 209-211 contributes to the N-acetyl-D-glucosamine binding site; the sequence is IYR. Ca(2+)-binding residues include Asn-219 and Asp-220.

As to quaternary structure, may interact with PTPN6 via its ITIM site. Expressed in splenic antigen-presenting cells including B-cells, monocytes/macrophages, and dendritic cells (at protein level). Expressed in spleen and lymph node and slightly increased with dendritic cell maturation.

The protein resides in the cell membrane. In terms of biological role, may be involved in regulating immune reactivity. May play a role in modulating dendritic cells (DC) differentiation and/or maturation. May be involved in the inhibition of B-cell-receptor-mediated calcium mobilization and protein tyrosine phosphorylation. Functionally, C-type lectin receptor that binds carbohydrates mannose and fucose but also weakly interacts with N-acetylglucosamine (GlcNAc) in a Ca(2+)-dependent manner. Involved in regulating immune reactivity. Once triggered by antigen, it is internalized by clathrin-dependent endocytosis and delivers its antigenic cargo into the antigen presentation pathway resulting in cross-priming of CD8(+) T cells. This cross-presentation and cross-priming are enhanced by TLR7 and TLR8 agonists with increased expansion of the CD8(+) T cells, high production of IFNG and TNF with reduced levels of IL4, IL5 and IL13. In plasmacytoid dendritic cells, inhibits TLR9-mediated IFNA and TNF production. May be involved via its ITIM motif (immunoreceptor tyrosine-based inhibitory motifs) in the inhibition of B-cell-receptor-mediated calcium mobilization and protein tyrosine phosphorylation. The polypeptide is C-type lectin domain family 4 member A (Clec4a) (Mus musculus (Mouse)).